We begin with the raw amino-acid sequence, 214 residues long: A-type ATP synthase subunit D (214 aa).

Belongs to the V-ATPase D subunit family. Has multiple subunits with at least A(3), B(3), C, D, E, F, H, I and proteolipid K(x).

The protein localises to the cell membrane. Functionally, component of the A-type ATP synthase that produces ATP from ADP in the presence of a proton gradient across the membrane. This chain is A-type ATP synthase subunit D, found in Thermococcus sibiricus (strain DSM 12597 / MM 739).